A 377-amino-acid polypeptide reads, in one-letter code: Succinyl-diaminopimelate desuccinylase (377 aa).

Position 67 (His-67) interacts with Zn(2+). Residue Asp-69 is part of the active site. Asp-100 provides a ligand contact to Zn(2+). Catalysis depends on Glu-134, which acts as the Proton acceptor. Zn(2+) is bound by residues Glu-135, Glu-163, and His-349.

Belongs to the peptidase M20A family. DapE subfamily. As to quaternary structure, homodimer. The cofactor is Zn(2+). Co(2+) serves as cofactor.

It carries out the reaction N-succinyl-(2S,6S)-2,6-diaminopimelate + H2O = (2S,6S)-2,6-diaminopimelate + succinate. It participates in amino-acid biosynthesis; L-lysine biosynthesis via DAP pathway; LL-2,6-diaminopimelate from (S)-tetrahydrodipicolinate (succinylase route): step 3/3. Functionally, catalyzes the hydrolysis of N-succinyl-L,L-diaminopimelic acid (SDAP), forming succinate and LL-2,6-diaminopimelate (DAP), an intermediate involved in the bacterial biosynthesis of lysine and meso-diaminopimelic acid, an essential component of bacterial cell walls. This is Succinyl-diaminopimelate desuccinylase from Haemophilus influenzae (strain PittGG).